A 392-amino-acid polypeptide reads, in one-letter code: Iripin-4 (392 aa).

The signal sequence occupies residues 1-16 (MRSLATFMSLLTICWG). N-linked (GlcNAc...) asparagine glycosylation is found at N104, N130, and N265.

It belongs to the serpin family. In terms of tissue distribution, female salivary gland.

The protein localises to the secreted. Its function is as follows. Serpin with unknown function. Weakly inhibits human granzyme B (GZMB). Acts as a substrate for porcine elastase. The polypeptide is Iripin-4 (Ixodes ricinus (Common tick)).